The chain runs to 746 residues: 1,4-alpha-glucan branching enzyme GlgB (746 aa).

Residue Asp-418 is the Nucleophile of the active site. The Proton donor role is filled by Glu-471.

Belongs to the glycosyl hydrolase 13 family. GlgB subfamily. Monomer.

It catalyses the reaction Transfers a segment of a (1-&gt;4)-alpha-D-glucan chain to a primary hydroxy group in a similar glucan chain.. It participates in glycan biosynthesis; glycogen biosynthesis. Its function is as follows. Catalyzes the formation of the alpha-1,6-glucosidic linkages in glycogen by scission of a 1,4-alpha-linked oligosaccharide from growing alpha-1,4-glucan chains and the subsequent attachment of the oligosaccharide to the alpha-1,6 position. The polypeptide is 1,4-alpha-glucan branching enzyme GlgB (Nitrosospira multiformis (strain ATCC 25196 / NCIMB 11849 / C 71)).